A 203-amino-acid polypeptide reads, in one-letter code: Sperm-specific protein PHI-2B/PHI-3 (203 aa).

Residues 1 to 35 (MPSPSRKSRSRSRSRSKSPKRSPAKKARKTPKKPR) show a composition bias toward basic residues. Disordered regions lie at residues 1–46 (MPSP…PSTL) and 104–203 (KTSA…KSKK). The H15 domain maps to 41 to 120 (KKPSTLSMIV…GATGSFRVGK (80 aa)). Composition is skewed to basic residues over residues 126–140 (KKAKKAKSPKKKSSK) and 147–203 (KAKK…KSKK).

PL-II* and PL-IV are produced by post-translational cleavage of a common precursor. Sperm.

Its subcellular location is the nucleus. The protein resides in the chromosome. In terms of biological role, linker histones are implicated in chromatin remodeling and/or transcriptional regulation during spermiogenesis, the process of spermatid maturation into spermatozoa. Protamines substitute for histones in the chromatin of sperm during the haploid phase of spermatogenesis. They compact sperm DNA into a highly condensed, stable and inactive complex. This chain is Sperm-specific protein PHI-2B/PHI-3, found in Mytilus trossulus (Blue mussel).